The primary structure comprises 1023 residues: Solute carrier family 12 member 3 (1023 aa).

The Cytoplasmic segment spans residues 1–134; the sequence is MELPGDGVHL…EPPPEPPRFG (134 aa). The segment at 91–131 is disordered; that stretch reads DPEQDDFKPPMYEETAGERMGGGDSSEEEEEEHKEPPPEPP. Residues 135-164 traverse the membrane as a discontinuously helical segment; sequence WVQGVMIRCMLNIWGVILYLRLPWITAQAG. Na(+) is bound by residues Leu-145 and Trp-148. A helical membrane pass occupies residues 165 to 186; that stretch reads IGLTWVIILLSSFITGITGLST. Topologically, residues 187–217 are cytoplasmic; that stretch reads SAIATNGKVKGGGTYFLISRSLGPELGGSIG. Residues 218 to 240 form a helical membrane-spanning segment; the sequence is LIFAFANAVAVAMHTVGFAETVT. Topologically, residues 241–252 are extracellular; that stretch reads DLMRENGVVMVD. A run of 2 helical transmembrane segments spans residues 253–277 and 278–300; these read PIND…AGME and WESK…YIVG. At 301 to 335 the chain is on the extracellular side; the sequence is TIIPASPQKQAKGFFSYKAEIFAANFVPGWRGKEG. The chain crosses the membrane as a discontinuously helical span at residues 336 to 357; sequence SFFGMFSIFFPSATGILAGANI. Residues Gly-350, Ile-351, and Leu-352 each coordinate chloride. Residues 358–368 are Cytoplasmic-facing; the sequence is SGDLKDPTVAI. The helical transmembrane segment at 369-390 threads the bilayer; it reads PRGTLMAIFWTTISYLIISATI. The Extracellular portion of the chain corresponds to 391 to 452; the sequence is GACVVRDASG…YQSMSLVSAF (62 aa). N-linked (GlcNAc...) asparagine glycosylation is found at Asn-403 and Asn-414. 2 disulfide bridges follow: Cys-415–Cys-420 and Cys-429–Cys-435. Asn-432 carries an N-linked (GlcNAc...) asparagine glycan. The helical transmembrane segment at 453-476 threads the bilayer; sequence APLISAGIFGATLSSALACLVSAP. Residues Ala-463, Ser-466, and Ser-467 each coordinate Na(+). Residues 477–506 lie on the Cytoplasmic side of the membrane; it reads KVFQCLCKDQLYPLIGFFGKGYGKNAEPLR. The chain crosses the membrane as a helical span at residues 507-521; the sequence is AYLLTYVIAVCFVLI. Residues 522 to 526 are Extracellular-facing; it reads AELNT. A helical membrane pass occupies residues 527 to 543; sequence IAPIISNFFLCSYALIN. Chloride is bound at residue Tyr-539. Residues 544–566 are Cytoplasmic-facing; that stretch reads FSCFHASVTNSPGWRPSFRFYSK. Transmembrane regions (helical) follow at residues 567-586 and 587-598; these read WLSL…LTWW and AALIAFGVVFFL. Residues 599–1023 lie on the Cytoplasmic side of the membrane; it reads LGYTLYKKPA…QENVLTFYCQ (425 aa). The interval 614–629 is scissor helix; that stretch reads SVQASSYSMALNQCVG. 5 residues coordinate ATP: Leu-647, Arg-654, Val-676, Gly-733, and Leu-772.

This sequence belongs to the SLC12A transporter family. Homodimer; adopts a domain-swap conformation at the scissor helices connecting the transmembrane domain and C-terminal domain. In terms of tissue distribution, expressed in urinary bladder, intestine, ovary, skeletal muscle, eye, brain, and kidney.

It localises to the cell membrane. It catalyses the reaction chloride(out) + Na(+)(out) = chloride(in) + Na(+)(in). Its activity is regulated as follows. Inhibited by thiazide-type diuretics including polythiazide, metolazone, cyclothiazide, hydrochlorothiazide and chlorthalidone. Thiazide drugs, specifically inhibit SLC12A3/NCC transporter activity by competing with chloride for binding. Its function is as follows. Electroneutral sodium and chloride ion cotransporter, with a coupling ratio 1 Na(+):1 Cl(-). Mediates sodium and chloride reabsorption. This chain is Solute carrier family 12 member 3 (slc12a3), found in Pseudopleuronectes americanus (Winter flounder).